The chain runs to 81 residues: UPF0298 protein SAK_1599 (81 aa).

It belongs to the UPF0298 family.

The protein localises to the cytoplasm. The chain is UPF0298 protein SAK_1599 from Streptococcus agalactiae serotype Ia (strain ATCC 27591 / A909 / CDC SS700).